The primary structure comprises 378 residues: Chaperone protein DnaJ (378 aa).

The 65-residue stretch at 5-69 (EFYDRLGVSK…QKRAAYDQYG (65 aa)) folds into the J domain. Residues 135-217 (GTEKEVKYHR…CHGTGHEKQA (83 aa)) form a CR-type zinc finger. Residues Cys148, Cys151, Cys165, Cys168, Cys191, Cys194, Cys205, and Cys208 each coordinate Zn(2+). 4 CXXCXGXG motif repeats span residues 148–155 (CRTCNGSG), 165–172 (CGRCHGAG), 191–198 (CDVCHGRG), and 205–212 (CTTCHGTG).

This sequence belongs to the DnaJ family. As to quaternary structure, homodimer. Zn(2+) serves as cofactor.

Its subcellular location is the cytoplasm. Participates actively in the response to hyperosmotic and heat shock by preventing the aggregation of stress-denatured proteins and by disaggregating proteins, also in an autonomous, DnaK-independent fashion. Unfolded proteins bind initially to DnaJ; upon interaction with the DnaJ-bound protein, DnaK hydrolyzes its bound ATP, resulting in the formation of a stable complex. GrpE releases ADP from DnaK; ATP binding to DnaK triggers the release of the substrate protein, thus completing the reaction cycle. Several rounds of ATP-dependent interactions between DnaJ, DnaK and GrpE are required for fully efficient folding. Also involved, together with DnaK and GrpE, in the DNA replication of plasmids through activation of initiation proteins. The protein is Chaperone protein DnaJ of Streptococcus pneumoniae serotype 4 (strain ATCC BAA-334 / TIGR4).